Consider the following 330-residue polypeptide: Methionyl-tRNA formyltransferase (330 aa).

117-120 (SLLP) lines the (6S)-5,6,7,8-tetrahydrofolate pocket.

This sequence belongs to the Fmt family.

It carries out the reaction L-methionyl-tRNA(fMet) + (6R)-10-formyltetrahydrofolate = N-formyl-L-methionyl-tRNA(fMet) + (6S)-5,6,7,8-tetrahydrofolate + H(+). Its function is as follows. Attaches a formyl group to the free amino group of methionyl-tRNA(fMet). The formyl group appears to play a dual role in the initiator identity of N-formylmethionyl-tRNA by promoting its recognition by IF2 and preventing the misappropriation of this tRNA by the elongation apparatus. The chain is Methionyl-tRNA formyltransferase from Verminephrobacter eiseniae (strain EF01-2).